A 1171-amino-acid chain; its full sequence is 7,8-linoleate diol synthase (1171 aa).

A compositionally biased stretch (low complexity) spans 1 to 22; it reads MASSSSSGSSTRSSSPSDPPSS. The tract at residues 1 to 56 is disordered; the sequence is MASSSSSGSSTRSSSPSDPPSSFFQKLGAFLGLFSKPQPPRPDYPHAPGNSAREEQ. The segment at 114–457 is fatty acid alpha-dioxygenase; it reads TDGLITGLWE…DGSFEDEGLI (344 aa). Heme b is bound at residue histidine 213. Ca(2+) is bound by residues aspartate 214, serine 229, tyrosine 231, aspartate 233, and serine 235. Residue tyrosine 385 is part of the active site. Histidine 388 lines the heme b pocket. Residues 675-1171 form an epoxy alcohol synthase region; sequence KILNNQKDFK…PMNMKIRWDD (497 aa). The tract at residues 873–900 is disordered; that stretch reads GLANGGANGHANGNANGHTNGNGIHQNG. Low complexity predominate over residues 881-895; sequence GHANGNANGHTNGNG. Cysteine 1089 lines the heme pocket.

The protein in the N-terminal section; belongs to the peroxidase family. It in the C-terminal section; belongs to the cytochrome P450 family. In terms of assembly, homotetramer. It depends on heme b as a cofactor. Ca(2+) is required as a cofactor. Heme serves as cofactor.

The catalysed reaction is (9Z,12Z)-octadecadienoate + O2 = (8R,9Z,12Z)-8-hydroperoxyoctadeca-9,12-dienoate. It carries out the reaction (8R,9Z,12Z)-8-hydroperoxyoctadeca-9,12-dienoate = (7S,8S,9Z,12Z)-7,8-dihydroxyoctadeca-9,12-dienoate. Its function is as follows. 7,8-linoleate diol synthase is a bifunctional enzyme that converts linoleic acid (18:2n-6) into 8-hydroperoxy-8(E),12(Z)-octadecadienoic acid (8-HPODE) and then catalyzes the isomerization of the resulting hydroperoxide to 7,8-dihydroxy-9(Z),12(Z)-octadecadienoic acid (7,8-DiHODE). The sequence is that of 7,8-linoleate diol synthase from Pyricularia oryzae (strain 70-15 / ATCC MYA-4617 / FGSC 8958) (Rice blast fungus).